The sequence spans 470 residues: tRNA (guanine(37)-N(1))-methyltransferase (470 aa).

Residues 304-305, 332-333, and Asn370 each bind S-adenosyl-L-methionine; these read DL and DG.

Belongs to the class I-like SAM-binding methyltransferase superfamily. TRM5/TYW2 family. In terms of assembly, monomer.

Its subcellular location is the mitochondrion matrix. It localises to the nucleus. The protein resides in the cytoplasm. The catalysed reaction is guanosine(37) in tRNA + S-adenosyl-L-methionine = N(1)-methylguanosine(37) in tRNA + S-adenosyl-L-homocysteine + H(+). Specifically methylates the N1 position of guanosine-37 in various cytoplasmic and mitochondrial tRNAs. Methylation is not dependent on the nature of the nucleoside 5' of the target nucleoside. This is the first step in the biosynthesis of wybutosine (yW), a modified base adjacent to the anticodon of tRNAs and required for accurate decoding. The polypeptide is tRNA (guanine(37)-N(1))-methyltransferase (Theileria parva (East coast fever infection agent)).